The following is a 220-amino-acid chain: Orotate phosphoribosyltransferase (220 aa).

A 5-phospho-alpha-D-ribose 1-diphosphate-binding site is contributed by Lys-26. An orotate-binding site is contributed by 34–35 (FF). 5-phospho-alpha-D-ribose 1-diphosphate-binding positions include 72–73 (YK), Arg-101, Lys-102, Lys-105, His-107, and 126–134 (DDVITAGTS). Residues Thr-130 and Arg-158 each contribute to the orotate site.

The protein belongs to the purine/pyrimidine phosphoribosyltransferase family. PyrE subfamily. As to quaternary structure, homodimer. Mg(2+) is required as a cofactor.

The catalysed reaction is orotidine 5'-phosphate + diphosphate = orotate + 5-phospho-alpha-D-ribose 1-diphosphate. It functions in the pathway pyrimidine metabolism; UMP biosynthesis via de novo pathway; UMP from orotate: step 1/2. Functionally, catalyzes the transfer of a ribosyl phosphate group from 5-phosphoribose 1-diphosphate to orotate, leading to the formation of orotidine monophosphate (OMP). This chain is Orotate phosphoribosyltransferase, found in Bordetella avium (strain 197N).